A 908-amino-acid polypeptide reads, in one-letter code: Protein O-mannosyltransferase 1 (908 aa).

Disordered regions lie at residues 1–85 (MYNN…SAIN) and 115–160 (GSVE…SGSR). Basic residues predominate over residues 21–31 (QRRKTTTRSRS). 2 stretches are compositionally biased toward polar residues: residues 39–54 (CTSE…NGAQ) and 132–149 (LTAT…SPTI). A helical membrane pass occupies residues 190 to 210 (FTVNLSIDLFSWTLFLLAFCT). Asparagine 265 carries an N-linked (GlcNAc...) asparagine glycan. A run of 5 helical transmembrane segments spans residues 279 to 299 (VPIF…APAV), 311 to 328 (WAAA…SLLT), 331 to 351 (RFVL…ACLL), 370 to 390 (AGVL…ALAL), and 418 to 438 (LSRL…VFYV). 3 consecutive MIR domains span residues 473–534 (PLAV…VKRP), 545–602 (PDVI…VEIL), and 608–664 (GDSW…VEEH). 4 helical membrane passes run 749–769 (VLIW…LAFY), 788–808 (FLMA…PYYF), 813–833 (LFLH…CFVV), and 857–877 (LALL…LPLS).

The protein belongs to the glycosyltransferase 39 family. As to quaternary structure, interacts with tw/POMT2.

The protein localises to the endoplasmic reticulum membrane. The catalysed reaction is a di-trans,poly-cis-dolichyl beta-D-mannosyl phosphate + L-seryl-[protein] = 3-O-(alpha-D-mannosyl)-L-seryl-[protein] + a di-trans,poly-cis-dolichyl phosphate + H(+). The enzyme catalyses a di-trans,poly-cis-dolichyl beta-D-mannosyl phosphate + L-threonyl-[protein] = 3-O-(alpha-D-mannosyl)-L-threonyl-[protein] + a di-trans,poly-cis-dolichyl phosphate + H(+). Its pathway is protein modification; protein glycosylation. Its function is as follows. Rt/POMT1 and tw/POMT2 function as a protein O-mannosyltransferase in association with each other to generate and maintain normal muscle development. The chain is Protein O-mannosyltransferase 1 from Drosophila pseudoobscura pseudoobscura (Fruit fly).